The primary structure comprises 290 residues: Undecaprenyl-diphosphatase (290 aa).

Transmembrane regions (helical) follow at residues 39-59 (PGAAFTAISQIGTEAAVLIYF), 85-105 (AQMGWLVIVGSIPIGVLGITL), 118-138 (LIATTLIVMGIVLGVADRLAA), 202-222 (SFLLAIPAVLASGAYELKDVG), 230-250 (PTIFATLVAFFVGYAVIAWFM), and 261-281 (FVIYRILLGVVLFILIWAGVL).

Belongs to the UppP family.

It localises to the cell membrane. The enzyme catalyses di-trans,octa-cis-undecaprenyl diphosphate + H2O = di-trans,octa-cis-undecaprenyl phosphate + phosphate + H(+). Catalyzes the dephosphorylation of undecaprenyl diphosphate (UPP). Confers resistance to bacitracin. This chain is Undecaprenyl-diphosphatase, found in Streptomyces griseus subsp. griseus (strain JCM 4626 / CBS 651.72 / NBRC 13350 / KCC S-0626 / ISP 5235).